A 68-amino-acid polypeptide reads, in one-letter code: UPF0337 protein RB10934 (68 aa).

This sequence belongs to the UPF0337 (CsbD) family.

In Rhodopirellula baltica (strain DSM 10527 / NCIMB 13988 / SH1), this protein is UPF0337 protein RB10934.